Consider the following 416-residue polypeptide: Adipocyte plasma membrane-associated protein (416 aa).

Residues 1–32 are disordered; sequence MSEADGLRQRRPLRPQVVTDDDGQAPEAKDGS. At S2 the chain carries N-acetylserine. Residues 2–40 lie on the Cytoplasmic side of the membrane; it reads SEADGLRQRRPLRPQVVTDDDGQAPEAKDGSSFSGRVFR. Phosphothreonine is present on T19. A helical; Signal-anchor for type II membrane protein membrane pass occupies residues 41–61; the sequence is VTFLMLAVSLTVPLLGAMMLL. The Extracellular segment spans residues 62–416; sequence ESPIDPQPLS…FLCRLSLQAV (355 aa). N160 and N196 each carry an N-linked (GlcNAc...) asparagine glycan.

It belongs to the strictosidine synthase family. Liver, glomerular and tubular structures of the kidney, endothelial cells, arterial wall and pancreatic islets of Langerhans (at protein level). Found ubiquitously in adult as well as in embryonic tissues. In adult tissue, the highest expression is found in the liver, placenta and heart. Found on the cell surface of monocytes. In embryonic tissue, the highest expression levels is found in the liver and the kidney.

It is found in the membrane. Exhibits strong arylesterase activity with beta-naphthyl acetate and phenyl acetate. May play a role in adipocyte differentiation. The sequence is that of Adipocyte plasma membrane-associated protein (APMAP) from Homo sapiens (Human).